Reading from the N-terminus, the 292-residue chain is Release factor glutamine methyltransferase (292 aa).

S-adenosyl-L-methionine is bound by residues 126-130 (GTGTG), D157, W184, and N198. 198–201 (NPPY) serves as a coordination point for substrate.

It belongs to the protein N5-glutamine methyltransferase family. PrmC subfamily.

It carries out the reaction L-glutaminyl-[peptide chain release factor] + S-adenosyl-L-methionine = N(5)-methyl-L-glutaminyl-[peptide chain release factor] + S-adenosyl-L-homocysteine + H(+). Functionally, methylates the class 1 translation termination release factors RF1/PrfA and RF2/PrfB on the glutamine residue of the universally conserved GGQ motif. The chain is Release factor glutamine methyltransferase from Haemophilus influenzae (strain ATCC 51907 / DSM 11121 / KW20 / Rd).